Reading from the N-terminus, the 300-residue chain is Putative S-adenosyl-L-methionine-dependent methyltransferase MMAR_1058 (300 aa).

Residues D127 and 156–157 contribute to the S-adenosyl-L-methionine site; that span reads DL.

This sequence belongs to the UPF0677 family.

In terms of biological role, exhibits S-adenosyl-L-methionine-dependent methyltransferase activity. In Mycobacterium marinum (strain ATCC BAA-535 / M), this protein is Putative S-adenosyl-L-methionine-dependent methyltransferase MMAR_1058.